Here is a 110-residue protein sequence, read N- to C-terminus: Integration host factor subunit alpha (110 aa).

This sequence belongs to the bacterial histone-like protein family. Heterodimer of an alpha and a beta chain.

Functionally, this protein is one of the two subunits of integration host factor, a specific DNA-binding protein that functions in genetic recombination as well as in transcriptional and translational control. In Delftia acidovorans (strain DSM 14801 / SPH-1), this protein is Integration host factor subunit alpha.